The following is a 232-amino-acid chain: 2,3,4,5-tetrahydropyridine-2,6-dicarboxylate N-acetyltransferase (232 aa).

This sequence belongs to the transferase hexapeptide repeat family. DapH subfamily.

It carries out the reaction (S)-2,3,4,5-tetrahydrodipicolinate + acetyl-CoA + H2O = L-2-acetamido-6-oxoheptanedioate + CoA. It functions in the pathway amino-acid biosynthesis; L-lysine biosynthesis via DAP pathway; LL-2,6-diaminopimelate from (S)-tetrahydrodipicolinate (acetylase route): step 1/3. Its function is as follows. Catalyzes the transfer of an acetyl group from acetyl-CoA to tetrahydrodipicolinate. This chain is 2,3,4,5-tetrahydropyridine-2,6-dicarboxylate N-acetyltransferase, found in Streptococcus uberis (strain ATCC BAA-854 / 0140J).